Consider the following 422-residue polypeptide: Acyl-[acyl-carrier-protein] desaturase 6, chloroplastic (422 aa).

The transit peptide at 1–46 directs the protein to the chloroplast; it reads MAATATMAMPLANRLRCKPNTNSSSPSRTLFGRRVTMISSSRWMCR. The Fe cation site is built by E154, E192, H195, E245, E280, and H283.

The protein belongs to the fatty acid desaturase type 2 family. As to quaternary structure, homodimer. Fe(2+) serves as cofactor.

The protein resides in the plastid. It is found in the chloroplast. It participates in lipid metabolism; fatty acid metabolism. Its function is as follows. Introduces a cis double bond in the acyl chain of an acyl-[acyl-carrier protein]. The sequence is that of Acyl-[acyl-carrier-protein] desaturase 6, chloroplastic from Oryza sativa subsp. indica (Rice).